Consider the following 353-residue polypeptide: 3-isopropylmalate dehydrogenase (353 aa).

Residue 75–88 (GPKWENLPHEHKPE) coordinates NAD(+). Residues R95, R105, R133, and D219 each contribute to the substrate site. Positions 219, 243, and 247 each coordinate Mg(2+). Position 276–288 (276–288 (GSAPDIAGKNIAN)) interacts with NAD(+).

This sequence belongs to the isocitrate and isopropylmalate dehydrogenases family. LeuB type 1 subfamily. As to quaternary structure, homodimer. Requires Mg(2+) as cofactor. The cofactor is Mn(2+).

The protein localises to the cytoplasm. It catalyses the reaction (2R,3S)-3-isopropylmalate + NAD(+) = 4-methyl-2-oxopentanoate + CO2 + NADH. It functions in the pathway amino-acid biosynthesis; L-leucine biosynthesis; L-leucine from 3-methyl-2-oxobutanoate: step 3/4. Its function is as follows. Catalyzes the oxidation of 3-carboxy-2-hydroxy-4-methylpentanoate (3-isopropylmalate) to 3-carboxy-4-methyl-2-oxopentanoate. The product decarboxylates to 4-methyl-2 oxopentanoate. The sequence is that of 3-isopropylmalate dehydrogenase from Chlorobium luteolum (strain DSM 273 / BCRC 81028 / 2530) (Pelodictyon luteolum).